The chain runs to 368 residues: Endoglucanase (368 aa).

An N-terminal signal peptide occupies residues 1 to 21 (MNVLRSGLVTMLLLAAFSVQA). E55 (proton donor) is an active-site residue. The Nucleophile role is filled by D116.

Belongs to the glycosyl hydrolase 8 (cellulase D) family.

It is found in the secreted. It catalyses the reaction Endohydrolysis of (1-&gt;4)-beta-D-glucosidic linkages in cellulose, lichenin and cereal beta-D-glucans.. The protein operates within glycan metabolism; bacterial cellulose biosynthesis. Hydrolyzes carboxymethylcellulose. The sequence is that of Endoglucanase (bcsZ) from Escherichia coli O157:H7.